The following is a 575-amino-acid chain: uncharacterized protein (575 aa).

Residues alanine 507 to lysine 536 form a disordered region.

This is an uncharacterized protein from Ostreid herpesvirus 1 (isolate France) (OsHV-1).